The following is a 310-amino-acid chain: GILSTVRATREASFENLYDKSKKLLDYMLLHGVTTVEAKSGYGLDWETEKRQLDVVGALDRDHDIDLVSTFMAAHAVPPEYKGRSQEYLELIVEEMLPRVKAENLAEFCDIFCEKGVFTADESRYLLSKAKEMGFKLRIHADEMESIGGVDVAAELGATSAEHLMMATDEGIRKMAEAKVIGNLLPATTFSLMEDTYAPARKMLEAGMAITLTTDSNPGSCPTANLQFVMQLGCFMCALTPVEVLNAVTINAAYSVNRQDKIGSFDTGKQADITILDAKNIDYPLYFFATNLTHQVYKAGKLVVDQGRIV.

Positions 42 and 75 each coordinate 4-imidazolone-5-propanoate. N-formimidoyl-L-glutamate is bound at residue Tyr-42. A Fe(3+)-binding site is contributed by His-140. Position 140 (His-140) interacts with Zn(2+). Glu-143 provides a ligand contact to 4-imidazolone-5-propanoate. Asp-215 is a binding site for Fe(3+). Asp-215 is a binding site for Zn(2+). Residues Asn-217 and Gly-219 each contribute to the N-formimidoyl-L-glutamate site. 4-imidazolone-5-propanoate is bound at residue Ser-220.

The protein belongs to the metallo-dependent hydrolases superfamily. HutI family. Requires Zn(2+) as cofactor. Fe(3+) serves as cofactor.

The protein resides in the cytoplasm. The enzyme catalyses 4-imidazolone-5-propanoate + H2O = N-formimidoyl-L-glutamate. It participates in amino-acid degradation; L-histidine degradation into L-glutamate; N-formimidoyl-L-glutamate from L-histidine: step 3/3. In terms of biological role, catalyzes the hydrolytic cleavage of the carbon-nitrogen bond in imidazolone-5-propanoate to yield N-formimidoyl-L-glutamate. It is the third step in the universal histidine degradation pathway. The chain is Imidazolonepropionase (hutI) from Streptococcus gordonii.